Reading from the N-terminus, the 1062-residue chain is Carbamoyl phosphate synthase pyrimidine-specific large chain (1062 aa).

The interval 1–401 is carboxyphosphate synthetic domain; sequence MGKREDIKKI…SLLKAVRSLE (401 aa). Positions 129, 169, 175, 176, 208, 210, 215, 241, 242, 243, 284, and 298 each coordinate ATP. Residues 133-327 enclose the ATP-grasp 1 domain; sequence RALMKELNEP…IAKIAAKIAV (195 aa). Residues Gln-284, Glu-298, and Asn-300 each contribute to the Mg(2+) site. Mn(2+) is bound by residues Gln-284, Glu-298, and Asn-300. An oligomerization domain region spans residues 402–546; the sequence is AGVYHLDQPD…YGTYEEENES (145 aa). Residues 547–929 are carbamoyl phosphate synthetic domain; that stretch reads ERTDKKSILV…ALYKGLIASG (383 aa). The ATP-grasp 2 domain occupies 671-861; it reads EQTLVELNIP…MANVATKVML (191 aa). 10 residues coordinate ATP: Arg-707, Arg-746, Leu-748, Glu-752, Gly-777, Val-778, His-779, Ser-780, Gln-820, and Glu-832. Mg(2+) contacts are provided by Gln-820, Glu-832, and Asn-834. Gln-820, Glu-832, and Asn-834 together coordinate Mn(2+). The MGS-like domain occupies 930–1062; that stretch reads MSIPTHGSVL…FSAESMPVMQ (133 aa). Positions 930–1062 are allosteric domain; the sequence is MSIPTHGSVL…FSAESMPVMQ (133 aa).

The protein belongs to the CarB family. Composed of two chains; the small (or glutamine) chain promotes the hydrolysis of glutamine to ammonia, which is used by the large (or ammonia) chain to synthesize carbamoyl phosphate. Tetramer of heterodimers (alpha,beta)4. The cofactor is Mg(2+). It depends on Mn(2+) as a cofactor.

The catalysed reaction is hydrogencarbonate + L-glutamine + 2 ATP + H2O = carbamoyl phosphate + L-glutamate + 2 ADP + phosphate + 2 H(+). The enzyme catalyses hydrogencarbonate + NH4(+) + 2 ATP = carbamoyl phosphate + 2 ADP + phosphate + 2 H(+). It participates in amino-acid biosynthesis; L-arginine biosynthesis; carbamoyl phosphate from bicarbonate: step 1/1. Its pathway is pyrimidine metabolism; UMP biosynthesis via de novo pathway; (S)-dihydroorotate from bicarbonate: step 1/3. Its function is as follows. Small subunit of the glutamine-dependent carbamoyl phosphate synthetase (CPSase). CPSase catalyzes the formation of carbamoyl phosphate from the ammonia moiety of glutamine, carbonate, and phosphate donated by ATP, constituting the first step of the biosynthetic pathway leading to pyrimidine nucleotides. The large subunit (synthetase) binds the substrates ammonia (free or transferred from glutamine from the small subunit), hydrogencarbonate and ATP and carries out an ATP-coupled ligase reaction, activating hydrogencarbonate by forming carboxy phosphate which reacts with ammonia to form carbamoyl phosphate. The polypeptide is Carbamoyl phosphate synthase pyrimidine-specific large chain (pyrAB) (Halalkalibacterium halodurans (strain ATCC BAA-125 / DSM 18197 / FERM 7344 / JCM 9153 / C-125) (Bacillus halodurans)).